We begin with the raw amino-acid sequence, 314 residues long: Protein EXORDIUM (314 aa).

Residues 1–21 form the signal peptide; that stretch reads MYLLVFKLFLFLSLLQISVSA.

Belongs to the EXORDIUM family. Expressed in root tips, vascular tissue of roots, shoot apex, rosette leaves and embryos.

It is found in the secreted. The protein resides in the extracellular space. The protein localises to the apoplast. In terms of biological role, required for cell expansion in leaves. May mediate brassinosteroid (BR)-induced leaf growth. May play a role in the control of BR responses in roots. May be involved in signaling processes that coordinate BR responses with environmental or developmental signals. This chain is Protein EXORDIUM (EXO), found in Arabidopsis thaliana (Mouse-ear cress).